Reading from the N-terminus, the 66-residue chain is Large ribosomal subunit protein bL33c (66 aa).

The protein belongs to the bacterial ribosomal protein bL33 family.

The protein resides in the plastid. It is found in the chloroplast. This is Large ribosomal subunit protein bL33c from Cicer arietinum (Chickpea).